A 945-amino-acid chain; its full sequence is Isoleucine--tRNA ligase 1 (945 aa).

The 'HIGH' region signature appears at 66-76; sequence PYANGDIHLGH. Glutamate 581 lines the L-isoleucyl-5'-AMP pocket. Positions 622-626 match the 'KMSKS' region motif; the sequence is KMSKS. Position 625 (lysine 625) interacts with ATP. Positions 908, 911, 928, and 931 each coordinate Zn(2+).

It belongs to the class-I aminoacyl-tRNA synthetase family. IleS type 1 subfamily. Monomer. Zn(2+) is required as a cofactor.

It is found in the cytoplasm. The catalysed reaction is tRNA(Ile) + L-isoleucine + ATP = L-isoleucyl-tRNA(Ile) + AMP + diphosphate. Its function is as follows. Catalyzes the attachment of isoleucine to tRNA(Ile). As IleRS can inadvertently accommodate and process structurally similar amino acids such as valine, to avoid such errors it has two additional distinct tRNA(Ile)-dependent editing activities. One activity is designated as 'pretransfer' editing and involves the hydrolysis of activated Val-AMP. The other activity is designated 'posttransfer' editing and involves deacylation of mischarged Val-tRNA(Ile). This is Isoleucine--tRNA ligase 1 from Burkholderia mallei (strain ATCC 23344).